Here is a 386-residue protein sequence, read N- to C-terminus: Probable protein phosphatase 2C 36 (386 aa).

Residues 60-363 (ELSVAVVQGN…DDITVIVLFI (304 aa)) form the PPM-type phosphatase domain. Mn(2+) contacts are provided by D94, G95, D295, and D354.

Belongs to the PP2C family. It depends on Mg(2+) as a cofactor. Mn(2+) is required as a cofactor.

It catalyses the reaction O-phospho-L-seryl-[protein] + H2O = L-seryl-[protein] + phosphate. It carries out the reaction O-phospho-L-threonyl-[protein] + H2O = L-threonyl-[protein] + phosphate. The chain is Probable protein phosphatase 2C 36 from Oryza sativa subsp. japonica (Rice).